The primary structure comprises 466 residues: 3-isopropylmalate dehydratase large subunit (466 aa).

Positions 347, 408, and 411 each coordinate [4Fe-4S] cluster.

The protein belongs to the aconitase/IPM isomerase family. LeuC type 1 subfamily. Heterodimer of LeuC and LeuD. [4Fe-4S] cluster serves as cofactor.

The enzyme catalyses (2R,3S)-3-isopropylmalate = (2S)-2-isopropylmalate. Its pathway is amino-acid biosynthesis; L-leucine biosynthesis; L-leucine from 3-methyl-2-oxobutanoate: step 2/4. Its function is as follows. Catalyzes the isomerization between 2-isopropylmalate and 3-isopropylmalate, via the formation of 2-isopropylmaleate. The protein is 3-isopropylmalate dehydratase large subunit of Herminiimonas arsenicoxydans.